The following is a 236-amino-acid chain: 2,3,4,5-tetrahydropyridine-2,6-dicarboxylate N-acetyltransferase (236 aa).

Belongs to the transferase hexapeptide repeat family. DapH subfamily.

It carries out the reaction (S)-2,3,4,5-tetrahydrodipicolinate + acetyl-CoA + H2O = L-2-acetamido-6-oxoheptanedioate + CoA. It functions in the pathway amino-acid biosynthesis; L-lysine biosynthesis via DAP pathway; LL-2,6-diaminopimelate from (S)-tetrahydrodipicolinate (acetylase route): step 1/3. Catalyzes the transfer of an acetyl group from acetyl-CoA to tetrahydrodipicolinate. The sequence is that of 2,3,4,5-tetrahydropyridine-2,6-dicarboxylate N-acetyltransferase from Listeria monocytogenes serotype 4b (strain CLIP80459).